The primary structure comprises 364 residues: DNA polymerase IV (364 aa).

One can recognise a UmuC domain in the interval 6 to 186 (IIHIDMDAFY…LPIESFWGVG (181 aa)). The Mg(2+) site is built by D10 and D104. Residue E105 is part of the active site.

It belongs to the DNA polymerase type-Y family. In terms of assembly, monomer. The cofactor is Mg(2+).

It localises to the cytoplasm. The catalysed reaction is DNA(n) + a 2'-deoxyribonucleoside 5'-triphosphate = DNA(n+1) + diphosphate. Poorly processive, error-prone DNA polymerase involved in untargeted mutagenesis. Copies undamaged DNA at stalled replication forks, which arise in vivo from mismatched or misaligned primer ends. These misaligned primers can be extended by PolIV. Exhibits no 3'-5' exonuclease (proofreading) activity. May be involved in translesional synthesis, in conjunction with the beta clamp from PolIII. In Bacteroides fragilis (strain YCH46), this protein is DNA polymerase IV.